Reading from the N-terminus, the 164-residue chain is Cyclic pyranopterin monophosphate synthase (164 aa).

Substrate is bound by residues 75–77 (MCH) and 116–117 (ME). Asp-131 is a catalytic residue.

It belongs to the MoaC family. As to quaternary structure, homohexamer; trimer of dimers.

The catalysed reaction is (8S)-3',8-cyclo-7,8-dihydroguanosine 5'-triphosphate = cyclic pyranopterin phosphate + diphosphate. Its pathway is cofactor biosynthesis; molybdopterin biosynthesis. Catalyzes the conversion of (8S)-3',8-cyclo-7,8-dihydroguanosine 5'-triphosphate to cyclic pyranopterin monophosphate (cPMP). The chain is Cyclic pyranopterin monophosphate synthase from Staphylococcus aureus (strain bovine RF122 / ET3-1).